Consider the following 475-residue polypeptide: Putative aldehyde dehydrogenase (475 aa).

Residues 146 to 147 and 223 to 224 contribute to the NAD(+) site; these read WN and GS. Glu-245 functions as the Proton acceptor in the catalytic mechanism. Leu-246 contributes to the NAD(+) binding site. Cys-279 acts as the Nucleophile in catalysis. Position 379 (Glu-379) interacts with NAD(+).

Belongs to the aldehyde dehydrogenase family.

It carries out the reaction an aldehyde + NAD(+) + H2O = a carboxylate + NADH + 2 H(+). This is Putative aldehyde dehydrogenase from Staphylococcus aureus (strain bovine RF122 / ET3-1).